A 329-amino-acid polypeptide reads, in one-letter code: Phosphate import ATP-binding protein PstB (329 aa).

The ABC transporter domain maps to 83–325 (FEIENLNFWY…PKQKETNRYI (243 aa)). 116–123 (GKSGCGKS) provides a ligand contact to ATP.

The protein belongs to the ABC transporter superfamily. Phosphate importer (TC 3.A.1.7) family. As to quaternary structure, the complex is composed of two ATP-binding proteins (PstB), two transmembrane proteins (PstC and PstA) and a solute-binding protein (PstS).

The protein resides in the cell membrane. It catalyses the reaction phosphate(out) + ATP + H2O = ADP + 2 phosphate(in) + H(+). Its function is as follows. Part of the ABC transporter complex PstSACB involved in phosphate import. Responsible for energy coupling to the transport system. This chain is Phosphate import ATP-binding protein PstB, found in Mycoplasma pneumoniae (strain ATCC 29342 / M129 / Subtype 1) (Mycoplasmoides pneumoniae).